Consider the following 532-residue polypeptide: Bifunctional purine biosynthesis protein PurH (532 aa).

The MGS-like domain maps to 1 to 148 (MQTPKPIKRA…KNHKDVTIVV (148 aa)).

Belongs to the PurH family.

The enzyme catalyses (6R)-10-formyltetrahydrofolate + 5-amino-1-(5-phospho-beta-D-ribosyl)imidazole-4-carboxamide = 5-formamido-1-(5-phospho-D-ribosyl)imidazole-4-carboxamide + (6S)-5,6,7,8-tetrahydrofolate. It carries out the reaction IMP + H2O = 5-formamido-1-(5-phospho-D-ribosyl)imidazole-4-carboxamide. It functions in the pathway purine metabolism; IMP biosynthesis via de novo pathway; 5-formamido-1-(5-phospho-D-ribosyl)imidazole-4-carboxamide from 5-amino-1-(5-phospho-D-ribosyl)imidazole-4-carboxamide (10-formyl THF route): step 1/1. Its pathway is purine metabolism; IMP biosynthesis via de novo pathway; IMP from 5-formamido-1-(5-phospho-D-ribosyl)imidazole-4-carboxamide: step 1/1. This Alteromonas mediterranea (strain DSM 17117 / CIP 110805 / LMG 28347 / Deep ecotype) protein is Bifunctional purine biosynthesis protein PurH.